Here is a 1019-residue protein sequence, read N- to C-terminus: MASLDENADELHRMDSSDEASINDDQEDILDTPRTRVRKMLASVDMQLSSNAVSEASLDKESTVGNLENQKNRSYSSEIYLHSDTNFLSNFDSAYERVRRLLNQQGGKSSLQKKEVEQIETQEGGDNAKGSPSSENKDSDRNSRLQQLIEKKRNALKKEQEDLIQNSATSHSKSDNLDSESADDSDLADESELSKKYTSDRKIRNASKKALLELHRNTARLTRETALKPEVVVKKKVTLREFFQKIGFKNDNQLENKAISEEEANSTEPPNVEKEEPKPSVDRSTGIVNSEDIKELSVEDDSLELKEITPEALDIGQTSLFTTLNQTQVKKEDNKKFLLKEINAKLNEDDIDSELEIEVKPKTTALDNIEKSKLSEENEHGIKGKLKQLAEIKLSKDGKPFENEFNIKSFNRNLVKRAAVMAKLQRNQLEEELKAKGIYKPTIQGEKEEEEDPLERARNDAEKIRQLEKASGNASDEGELNDEEEVISSSNTPSTKAKTTNKVIISDVIIEATQAEPKRRQKNSRVVFDEEDLTGDSHGSSNMKISESDDESNGDMIRDSFDRLSSESIKDSQKTEELHDSFGINDEVDQSTSLYVQNSQPSASQLTIVDATYSQPPPRWESSSRDDKTNTSSTQPSQVDSLVPTQLDSTIPTQIDSVQRNKDQDDEEILEERRESRRDSKTFLSRTMLYNKDTGKADSAWASDLIEEQAIESDDEYAGIGGLSDDGLSDSDAELEVQNMIDDETTIQKGEVASMAQFAKDQEMDRDEKLVKQLMKDVTTGALRKRNRNGFAALDDSDDEDYSNLRREKLKELRRQKLLEDGNLNVLEGDKRKAFLATVEDSLVSSKDNLTWLDATVEDSGVGSSDLGDEYLYSEQSLNHEEEEQMEEELSEIFSSGGPNVVDRVYLKKSSTRHTSDNNSLEEVLPIFPGVRKLVSNSQSEKIGDLSNDNSMGAKSYKTPIISSTQRPQGRKFRGLMNQSSKADISRTVDAGSIKVVPNSQSANPPRLLASLNNYSDFD.

6 disordered regions span residues 1 to 33 (MASL…LDTP), 105 to 143 (QGGK…DRNS), 166 to 202 (NSAT…SDRK), 261 to 290 (EEEA…IVNS), 443 to 683 (IQGE…SKTF), and 965 to 1019 (TQRP…SDFD). Acidic residues predominate over residues 17 to 30 (SDEASINDDQEDIL). The segment covering 177-191 (LDSESADDSDLADES) has biased composition (acidic residues). Basic and acidic residues-rich tracts occupy residues 192–202 (ELSKKYTSDRK), 271–281 (NVEKEEPKPSV), and 454–468 (LERA…RQLE). The segment covering 476 to 486 (DEGELNDEEEV) has biased composition (acidic residues). Positions 487–503 (ISSSNTPSTKAKTTNKV) are enriched in polar residues. Basic and acidic residues predominate over residues 556 to 580 (MIRDSFDRLSSESIKDSQKTEELHD). Polar residues-rich tracts occupy residues 590-607 (QSTS…SQLT) and 630-658 (NTSS…IDSV). S604 is modified (phosphoserine). Position 645 is a phosphothreonine (T645). Basic and acidic residues predominate over residues 671–681 (EERRESRRDSK).

As to quaternary structure, interacts with cds1. In terms of processing, phosphorylated by rad3 and tel1.

The protein localises to the nucleus. In terms of biological role, component of the replisome and is required for rad3-dependent activation of the checkpoint kinase cds1 in response to replication fork arrest. Phosphorylation allows it to mediate the activation of cds1. The polypeptide is Mediator of replication checkpoint protein 1 (mrc1) (Schizosaccharomyces pombe (strain 972 / ATCC 24843) (Fission yeast)).